A 288-amino-acid chain; its full sequence is 33 kDa chaperonin (288 aa).

2 disulfides stabilise this stretch: Cys236-Cys238 and Cys269-Cys272.

The protein belongs to the HSP33 family. In terms of processing, under oxidizing conditions two disulfide bonds are formed involving the reactive cysteines. Under reducing conditions zinc is bound to the reactive cysteines and the protein is inactive.

It localises to the cytoplasm. Its function is as follows. Redox regulated molecular chaperone. Protects both thermally unfolding and oxidatively damaged proteins from irreversible aggregation. Plays an important role in the bacterial defense system toward oxidative stress. This chain is 33 kDa chaperonin, found in Lactococcus lactis subsp. cremoris (strain SK11).